The following is a 331-amino-acid chain: Protein REVEILLE 6 (331 aa).

Residues 67 to 121 (TITKSRESWTEPEHDKFLEALQLFDRDWKKIEAFIGSKTVIQIRSHAQKYFLKVQ) form the HTH myb-type domain. The H-T-H motif DNA-binding region spans 94 to 117 (WKKIEAFIGSKTVIQIRSHAQKYF). Disordered stretches follow at residues 122 to 166 (KSGT…EPND), 203 to 237 (LPKAGAGANNNCSSSSENTPRPRSNRDARDHGNVG), and 309 to 331 (SETATDHGGVNKTLNKDPPEIST). The segment covering 150–165 (VQLQVPGSFKSTSEPN) has biased composition (polar residues). Positions 211–220 (NNNCSSSSEN) are enriched in low complexity. Composition is skewed to basic and acidic residues over residues 226–235 (SNRDARDHGN) and 322–331 (LNKDPPEIST).

It localises to the nucleus. Functionally, probable transcription factor. RVE4, RVE6 and RVE8 are components of the circadian system acting synergistically to regulate flowering time, redundantly to regulate leaf growth, and antagonistically to regulate hypocotyl elongation; their action seems independent of ZTL and HY5. This chain is Protein REVEILLE 6, found in Arabidopsis thaliana (Mouse-ear cress).